The sequence spans 482 residues: UDP-N-acetylmuramate--L-alanine ligase (482 aa).

Position 123 to 129 (123 to 129 (GTHGKTT)) interacts with ATP.

It belongs to the MurCDEF family.

The protein resides in the cytoplasm. The catalysed reaction is UDP-N-acetyl-alpha-D-muramate + L-alanine + ATP = UDP-N-acetyl-alpha-D-muramoyl-L-alanine + ADP + phosphate + H(+). Its pathway is cell wall biogenesis; peptidoglycan biosynthesis. In terms of biological role, cell wall formation. This chain is UDP-N-acetylmuramate--L-alanine ligase, found in Pseudomonas putida (strain ATCC 47054 / DSM 6125 / CFBP 8728 / NCIMB 11950 / KT2440).